The following is a 208-amino-acid chain: Segregation and condensation protein B (208 aa).

Belongs to the ScpB family. Homodimer. Homodimerization may be required to stabilize the binding of ScpA to the Smc head domains. Component of a cohesin-like complex composed of ScpA, ScpB and the Smc homodimer, in which ScpA and ScpB bind to the head domain of Smc. The presence of the three proteins is required for the association of the complex with DNA.

The protein localises to the cytoplasm. Participates in chromosomal partition during cell division. May act via the formation of a condensin-like complex containing Smc and ScpA that pull DNA away from mid-cell into both cell halves. The chain is Segregation and condensation protein B from Mycoplasma pneumoniae (strain ATCC 29342 / M129 / Subtype 1) (Mycoplasmoides pneumoniae).